The sequence spans 100 residues: Toxin ParE3 (100 aa).

Belongs to the RelE toxin family.

In terms of biological role, toxic component of a type II toxin-antitoxin (TA) system. Its toxic effect is neutralized by coexpression with cognate antitoxin ParD3 but no other ParD or RelB antitoxin. This chain is Toxin ParE3 (parE3), found in Caulobacter vibrioides (strain ATCC 19089 / CIP 103742 / CB 15) (Caulobacter crescentus).